The chain runs to 202 residues: Recombination protein RecR (202 aa).

The C4-type zinc-finger motif lies at 57–72; that stretch reads CGVCRTFTEQPCCDIC. One can recognise a Toprim domain in the interval 81 to 176; sequence GQICVVESPS…STTKIAHGVP (96 aa).

Belongs to the RecR family.

May play a role in DNA repair. It seems to be involved in an RecBC-independent recombinational process of DNA repair. It may act with RecF and RecO. In Hamiltonella defensa subsp. Acyrthosiphon pisum (strain 5AT), this protein is Recombination protein RecR.